We begin with the raw amino-acid sequence, 149 residues long: Large ribosomal subunit protein uL22c (149 aa).

The protein belongs to the universal ribosomal protein uL22 family. In terms of assembly, part of the 50S ribosomal subunit.

The protein resides in the plastid. Its subcellular location is the chloroplast. Functionally, this protein binds specifically to 23S rRNA. The globular domain of the protein is located near the polypeptide exit tunnel on the outside of the subunit, while an extended beta-hairpin is found that lines the wall of the exit tunnel in the center of the 70S ribosome. The polypeptide is Large ribosomal subunit protein uL22c (rpl22) (Oryza nivara (Indian wild rice)).